The primary structure comprises 356 residues: Nucleotide-binding protein GDI1189/Gdia_1902 (356 aa).

20 to 27 (GLSGAGKS) provides a ligand contact to ATP. 65–68 (DSRT) is a binding site for GTP. Positions 285 to 313 (EPGGTCDSPGKPAHIEKGAAPTDVQSGGA) are disordered.

This sequence belongs to the RapZ-like family.

Functionally, displays ATPase and GTPase activities. This is Nucleotide-binding protein GDI1189/Gdia_1902 from Gluconacetobacter diazotrophicus (strain ATCC 49037 / DSM 5601 / CCUG 37298 / CIP 103539 / LMG 7603 / PAl5).